We begin with the raw amino-acid sequence, 773 residues long: Preaspterpenacid I synthase sttA (773 aa).

Residues 4–359 (ISDVMKHCVP…RYHRTDLATT (356 aa)) form a sesterterpenoid synthase region. Mg(2+) is bound at residue Asp-105. Asp-105 contacts substrate. Residues 211 to 214 (RVNE) are substrate. Asn-255 serves as a coordination point for substrate. Substrate regions lie at residues 259-263 (SFPKE) and 350-351 (RY). Residues 360-769 (AEDRATLIGK…RMMLLGMGPK (410 aa)) form a geranylfarnesyl diphosphate synthase region. A disordered region spans residues 423-447 (AFKKRNSRNGKQNGTEGSKSTFTNG). Residues 431–447 (NGKQNGTEGSKSTFTNG) are compositionally biased toward polar residues. The isopentenyl diphosphate site is built by Lys-493, Arg-496, and His-525. Mg(2+) contacts are provided by Asp-532 and Asp-536. Arg-541 contacts dimethylallyl diphosphate. Arg-542 serves as a coordination point for isopentenyl diphosphate. Positions 614, 615, 652, 659, and 669 each coordinate dimethylallyl diphosphate.

This sequence in the N-terminal section; belongs to the terpene synthase family. It in the C-terminal section; belongs to the FPP/GGPP synthase family.

It carries out the reaction 4 isopentenyl diphosphate + dimethylallyl diphosphate = (2E,6E,10E,14E)-geranylfarnesyl diphosphate + 4 diphosphate. The catalysed reaction is (2E,6E,10E,14E)-geranylfarnesyl diphosphate + H2O = preaspterpenacid acid I + diphosphate. It participates in secondary metabolite biosynthesis; terpenoid biosynthesis. Sesterterpenoid synthase; part of the gene cluster that mediates the biosynthesis of aspterpenacids. Performs both prenyl transferase and terpene cyclase activity, converting isopentenyl diphosphate and dimethylallyl diphosphate into geranylfarnesyl diphosphate (GFPP) and then converting GFPP into preaspterpenacid I. C22-oxidative modification of preaspterpenacid I by the cytochrome P450 monooxygenase sttB then leads to preaspterpenacid II. It has still to be determined how preaspterpenacid II is further modified to produce aspterpenacids. The sequence is that of Preaspterpenacid I synthase sttA from Aspergillus terreus (strain NIH 2624 / FGSC A1156).